A 508-amino-acid polypeptide reads, in one-letter code: Lysine--tRNA ligase (508 aa).

Positions 418 and 425 each coordinate Mg(2+).

Belongs to the class-II aminoacyl-tRNA synthetase family. In terms of assembly, homodimer. It depends on Mg(2+) as a cofactor.

The protein localises to the cytoplasm. The catalysed reaction is tRNA(Lys) + L-lysine + ATP = L-lysyl-tRNA(Lys) + AMP + diphosphate. The protein is Lysine--tRNA ligase of Burkholderia multivorans (strain ATCC 17616 / 249).